Reading from the N-terminus, the 343-residue chain is S-adenosylmethionine:tRNA ribosyltransferase-isomerase (343 aa).

Belongs to the QueA family. As to quaternary structure, monomer.

Its subcellular location is the cytoplasm. It catalyses the reaction 7-aminomethyl-7-carbaguanosine(34) in tRNA + S-adenosyl-L-methionine = epoxyqueuosine(34) in tRNA + adenine + L-methionine + 2 H(+). Its pathway is tRNA modification; tRNA-queuosine biosynthesis. Transfers and isomerizes the ribose moiety from AdoMet to the 7-aminomethyl group of 7-deazaguanine (preQ1-tRNA) to give epoxyqueuosine (oQ-tRNA). This Geotalea uraniireducens (strain Rf4) (Geobacter uraniireducens) protein is S-adenosylmethionine:tRNA ribosyltransferase-isomerase.